Here is a 408-residue protein sequence, read N- to C-terminus: Serine/threonine transporter SstT (408 aa).

Transmembrane regions (helical) follow at residues 11 to 31, 43 to 63, 82 to 102, 141 to 161, 192 to 212, 216 to 236, 290 to 310, 316 to 336, and 363 to 383; these read LANG…VSLA, FLGS…VFIL, IVVL…LLSM, ALMT…GLAL, IGIF…AIAG, LLAV…PLIV, IPLG…VLTL, LGIQ…AISA, and VAMQ…AAET.

This sequence belongs to the dicarboxylate/amino acid:cation symporter (DAACS) (TC 2.A.23) family.

Its subcellular location is the cell inner membrane. It catalyses the reaction L-serine(in) + Na(+)(in) = L-serine(out) + Na(+)(out). The catalysed reaction is L-threonine(in) + Na(+)(in) = L-threonine(out) + Na(+)(out). Functionally, involved in the import of serine and threonine into the cell, with the concomitant import of sodium (symport system). In Shewanella sp. (strain MR-4), this protein is Serine/threonine transporter SstT.